The primary structure comprises 204 residues: Peroxynitrite isomerase (204 aa).

The short motif at 21–27 (GEWEGSG) is the GXWXGXG element. Heme b is bound at residue His195.

This sequence belongs to the nitrobindin family. As to quaternary structure, homodimer. Requires heme b as cofactor.

The enzyme catalyses peroxynitrite = nitrate. The protein operates within nitrogen metabolism. Its function is as follows. Heme-binding protein able to scavenge peroxynitrite and to protect free L-tyrosine against peroxynitrite-mediated nitration, by acting as a peroxynitrite isomerase that converts peroxynitrite to nitrate. Therefore, this protein likely plays a role in peroxynitrite sensing and in the detoxification of reactive nitrogen and oxygen species (RNS and ROS, respectively). Is able to bind nitric oxide (NO) in vitro, but may act as a sensor of peroxynitrite levels in vivo. This Arthrobacter sp. (strain FB24) protein is Peroxynitrite isomerase.